We begin with the raw amino-acid sequence, 39 residues long: Photosystem II reaction center protein J (39 aa).

The helical transmembrane segment at 7-27 (IPLWVVAVIAGLGVIAVVGLF) threads the bilayer.

It belongs to the PsbJ family. PSII is composed of 1 copy each of membrane proteins PsbA, PsbB, PsbC, PsbD, PsbE, PsbF, PsbH, PsbI, PsbJ, PsbK, PsbL, PsbM, PsbT, PsbX, PsbY, PsbZ, Psb30/Ycf12, peripheral proteins PsbO, CyanoQ (PsbQ), PsbU, PsbV and a large number of cofactors. It forms dimeric complexes.

It localises to the cellular thylakoid membrane. In terms of biological role, one of the components of the core complex of photosystem II (PSII). PSII is a light-driven water:plastoquinone oxidoreductase that uses light energy to abstract electrons from H(2)O, generating O(2) and a proton gradient subsequently used for ATP formation. It consists of a core antenna complex that captures photons, and an electron transfer chain that converts photonic excitation into a charge separation. The chain is Photosystem II reaction center protein J from Gloeothece citriformis (strain PCC 7424) (Cyanothece sp. (strain PCC 7424)).